Here is a 2339-residue protein sequence, read N- to C-terminus: DNA-directed RNA polymerase III subunit RPC1 (2339 aa).

Residues Cys-88, Cys-91, Cys-98, His-101, Cys-128, Cys-131, and Cys-175 each contribute to the Zn(2+) site. Residues Asp-611, Asp-613, and Asp-615 each contribute to the Mg(2+) site. The tract at residues 955–967 is bridging helix; the sequence is PTEFFFHTMSGRE. Disordered regions lie at residues 1503–1557 and 2038–2079; these read EKRK…NNYY and LKSE…DSDR. Residues 1509–1520 show a composition bias toward basic and acidic residues; it reads PKEEKENFDRNN. A compositionally biased stretch (low complexity) spans 1521–1557; sequence YKMITDNNNNDNNNNNNDNNNNDNNNNNNNSNNNNYY. Positions 2038–2047 are enriched in basic and acidic residues; that stretch reads LKSEKKKDIN. Residues 2049–2059 are compositionally biased toward low complexity; that stretch reads DNNNNDDNNNN.

This sequence belongs to the RNA polymerase beta' chain family. In terms of assembly, component of the RNA polymerase III (Pol III) complex consisting of 17 subunits.

It localises to the nucleus. It catalyses the reaction RNA(n) + a ribonucleoside 5'-triphosphate = RNA(n+1) + diphosphate. DNA-dependent RNA polymerase catalyzes the transcription of DNA into RNA using the four ribonucleoside triphosphates as substrates. Largest and catalytic core component of RNA polymerase III which synthesizes small RNAs, such as 5S rRNA and tRNAs. Forms the polymerase active center together with the second largest subunit. A single-stranded DNA template strand of the promoter is positioned within the central active site cleft of Pol III. A bridging helix emanates from RPC1 and crosses the cleft near the catalytic site and is thought to promote translocation of Pol III by acting as a ratchet that moves the RNA-DNA hybrid through the active site by switching from straight to bent conformations at each step of nucleotide addition. The sequence is that of DNA-directed RNA polymerase III subunit RPC1 from Plasmodium falciparum.